Reading from the N-terminus, the 165-residue chain is Ribosomal RNA large subunit methyltransferase H (165 aa).

Gly109 is an S-adenosyl-L-methionine binding site.

Belongs to the RNA methyltransferase RlmH family. As to quaternary structure, homodimer.

It is found in the cytoplasm. It carries out the reaction pseudouridine(1915) in 23S rRNA + S-adenosyl-L-methionine = N(3)-methylpseudouridine(1915) in 23S rRNA + S-adenosyl-L-homocysteine + H(+). Its function is as follows. Specifically methylates the pseudouridine at position 1915 (m3Psi1915) in 23S rRNA. This Methylorubrum populi (strain ATCC BAA-705 / NCIMB 13946 / BJ001) (Methylobacterium populi) protein is Ribosomal RNA large subunit methyltransferase H.